Consider the following 365-residue polypeptide: Probable caffeine synthase 2 (365 aa).

Tyrosine 19 is a binding site for S-adenosyl-L-homocysteine. Threonine 26 provides a ligand contact to caffeine. S-adenosyl-L-homocysteine-binding residues include cysteine 62, aspartate 99, leucine 100, serine 134, and phenylalanine 135. The caffeine site is built by tyrosine 152, histidine 155, and tryptophan 156. Residue asparagine 173 coordinates Mg(2+). Arginine 221 serves as a coordination point for caffeine. Residues aspartate 259, phenylalanine 261, and asparagine 262 each contribute to the Mg(2+) site. A caffeine-binding site is contributed by phenylalanine 317.

It belongs to the methyltransferase superfamily. Type-7 methyltransferase family. It depends on Mg(2+) as a cofactor.

It catalyses the reaction 7-methylxanthine + S-adenosyl-L-methionine = theobromine + S-adenosyl-L-homocysteine + H(+). The catalysed reaction is theobromine + S-adenosyl-L-methionine = caffeine + S-adenosyl-L-homocysteine + H(+). It carries out the reaction 1,7-dimethylxanthine + S-adenosyl-L-methionine = caffeine + S-adenosyl-L-homocysteine + H(+). The protein operates within alkaloid biosynthesis. Its function is as follows. May be involved in the biosynthesis of caffeine. Catalyzes the conversion of 7-methylxanthine (7mX) to theobromine and of theobromine to caffeine. Has 1-N-methylation activity. The polypeptide is Probable caffeine synthase 2 (Camellia sinensis (Tea plant)).